The sequence spans 91 residues: HssA/B-like protein 52 (91 aa).

2 disordered regions span residues 1-20 (MTLF…SKSS) and 72-91 (GGCG…CCGI).

This sequence belongs to the hssA/B family.

This Dictyostelium discoideum (Social amoeba) protein is HssA/B-like protein 52 (hssl52).